A 725-amino-acid chain; its full sequence is Glutamine-dependent NAD(+) synthetase (725 aa).

Residues 5-275 (VTVATCALNQ…VEVLTATLDL (271 aa)) form the CN hydrolase domain. The Proton acceptor; for glutaminase activity role is filled by Glu-45. Lys-114 serves as the catalytic For glutaminase activity. The active-site Nucleophile; for glutaminase activity is Cys-175. A ligase region spans residues 325 to 706 (YHRPEEEISL…KTSQTLEEQI (382 aa)). 355 to 362 (PLSGGVDS) contacts ATP. Ser-357 is an active-site residue.

In the C-terminal section; belongs to the NAD synthetase family. In terms of assembly, homohexamer.

It catalyses the reaction deamido-NAD(+) + L-glutamine + ATP + H2O = L-glutamate + AMP + diphosphate + NAD(+) + H(+). It participates in cofactor biosynthesis; NAD(+) biosynthesis; NAD(+) from deamido-NAD(+) (L-Gln route): step 1/1. In terms of biological role, catalyzes the final step of the nicotinamide adenine dinucleotide (NAD) de novo synthesis pathway, the ATP-dependent amidation of deamido-NAD using L-glutamine as a nitrogen source. The protein is Glutamine-dependent NAD(+) synthetase (Nadsyn1) of Rattus norvegicus (Rat).